We begin with the raw amino-acid sequence, 220 residues long: Probable acrEF/envCD operon repressor (220 aa).

The region spanning 10 to 70 (LKTRQELIET…EMWLQQPSLR (61 aa)) is the HTH tetR-type domain. Positions 33–52 (TLNDIADAANVTRGAIYWHF) form a DNA-binding region, H-T-H motif.

Functionally, potential regulator protein for the acrEF/envCD genes. The chain is Probable acrEF/envCD operon repressor (envR) from Escherichia coli O157:H7.